Consider the following 596-residue polypeptide: Chitooligosaccharidolytic beta-N-acetylglucosaminidase (596 aa).

A signal peptide spans 1–23 (MWLQAICIYTVFIIIGCGIPTAA). 3 N-linked (GlcNAc...) asparagine glycosylation sites follow: asparagine 166, asparagine 264, and asparagine 377.

This sequence belongs to the glycosyl hydrolase 20 family.

It catalyses the reaction Hydrolysis of terminal non-reducing N-acetyl-D-hexosamine residues in N-acetyl-beta-D-hexosaminides.. Active during metamorphosis to degrade chitin. This Bombyx mori (Silk moth) protein is Chitooligosaccharidolytic beta-N-acetylglucosaminidase.